Here is a 120-residue protein sequence, read N- to C-terminus: Ribosome-binding factor A (120 aa).

It belongs to the RbfA family. In terms of assembly, monomer. Binds 30S ribosomal subunits, but not 50S ribosomal subunits or 70S ribosomes.

Its subcellular location is the cytoplasm. One of several proteins that assist in the late maturation steps of the functional core of the 30S ribosomal subunit. Associates with free 30S ribosomal subunits (but not with 30S subunits that are part of 70S ribosomes or polysomes). Required for efficient processing of 16S rRNA. May interact with the 5'-terminal helix region of 16S rRNA. This is Ribosome-binding factor A from Borrelia garinii subsp. bavariensis (strain ATCC BAA-2496 / DSM 23469 / PBi) (Borreliella bavariensis).